Here is a 124-residue protein sequence, read N- to C-terminus: Large ribosomal subunit protein uL18 (124 aa).

Belongs to the universal ribosomal protein uL18 family. As to quaternary structure, part of the 50S ribosomal subunit; part of the 5S rRNA/L5/L18/L25 subcomplex. Contacts the 5S and 23S rRNAs.

This is one of the proteins that bind and probably mediate the attachment of the 5S RNA into the large ribosomal subunit, where it forms part of the central protuberance. This Aquifex aeolicus (strain VF5) protein is Large ribosomal subunit protein uL18.